A 162-amino-acid polypeptide reads, in one-letter code: Caveolin-2 (162 aa).

Residues 1–86 (MGLETEKADV…FEISKYVIYK (86 aa)) lie on the Cytoplasmic side of the membrane. Tyr19 is modified (phosphotyrosine; by SRC). A phosphoserine mark is found at Ser20 and Ser23. Tyr27 carries the phosphotyrosine; by SRC modification. Ser36 bears the Phosphoserine mark. An intramembrane region (helical) is located at residues 87-107 (FLTVFLAIPLAFTAGILFATL). Residues 108–162 (SCLHIWIIMPFVKTCLMVLPSVQTIWRSVTDVIIAPLCTSIGRICSSVSLQVSHD) lie on the Cytoplasmic side of the membrane.

This sequence belongs to the caveolin family. Monomer or homodimer. Interacts with CAV1; the interaction forms a stable heterooligomeric complex that is required for targeting to lipid rafts and for caveolae formation. Tyrosine phosphorylated forms do not form heterooligomers with the Tyr-19-phosphorylated form existing as a monomer or dimer, and the Tyr-27-form as a monomer only. Interacts (tyrosine phosphorylated form) with the SH2 domain-containing proteins, RASA1, NCK1 and SRC. Interacts (tyrosine phosphorylated form) with INSR, the interaction (Tyr-27-phosphorylated form) is increased on insulin stimulation. Interacts (Tyr-19 phosphorylated form) with MAPK1 (phosphorylated form); the interaction, promoted by insulin, leads to nuclear location and MAPK1 activation. Interacts with STAT3; the interaction is increased on insulin-induced tyrosine phosphorylation leading to STAT activation. Phosphorylated on serine and tyrosine residues. CAV1 promotes phosphorylation on Ser-23 which then targets the complex to the plasma membrane, lipid rafts and caveolae. Phosphorylation on Ser-36 appears to modulate mitosis in endothelial cells. Phosphorylation on both Tyr-19 and Tyr-27 is required for insulin-induced 'Ser-727' phosphorylation of STAT3 and its activation. Phosphorylation on Tyr-19 is required for insulin-induced phosphorylation of MAPK1 and DNA binding of STAT3. Tyrosine phosphorylation is induced by both EGF and insulin (By. similarity).

The protein localises to the nucleus. It is found in the cytoplasm. It localises to the golgi apparatus membrane. The protein resides in the cell membrane. Its subcellular location is the membrane. The protein localises to the caveola. May act as a scaffolding protein within caveolar membranes. Interacts directly with G-protein alpha subunits and can functionally regulate their activity. Acts as an accessory protein in conjunction with CAV1 in targeting to lipid rafts and driving caveolae formation. The Ser-36 phosphorylated form has a role in modulating mitosis in endothelial cells. Positive regulator of cellular mitogenesis of the MAPK signaling pathway. Required for the insulin-stimulated nuclear translocation and activation of MAPK1 and STAT3, and the subsequent regulation of cell cycle progression. The protein is Caveolin-2 (CAV2) of Atelerix albiventris (Middle-African hedgehog).